Reading from the N-terminus, the 72-residue chain is Long neurotoxin 1 (72 aa).

5 cysteine pairs are disulfide-bonded: C3-C21, C14-C42, C27-C31, C46-C57, and C58-C63.

It belongs to the three-finger toxin family. Long-chain subfamily. Type II alpha-neurotoxin sub-subfamily. As to expression, expressed by the venom gland.

The protein resides in the secreted. In terms of biological role, binds with high affinity to muscular (alpha-1/CHRNA1) and neuronal (alpha-7/CHRNA7) nicotinic acetylcholine receptor (nAChR) and inhibits acetylcholine from binding to the receptor, thereby impairing neuromuscular and neuronal transmission. This chain is Long neurotoxin 1, found in Naja anchietae (Anchieta's cobra).